Here is a 168-residue protein sequence, read N- to C-terminus: Large ribosomal subunit protein uL10 (168 aa).

This sequence belongs to the universal ribosomal protein uL10 family. In terms of assembly, part of the ribosomal stalk of the 50S ribosomal subunit. The N-terminus interacts with L11 and the large rRNA to form the base of the stalk. The C-terminus forms an elongated spine to which L12 dimers bind in a sequential fashion forming a multimeric L10(L12)X complex.

Its function is as follows. Forms part of the ribosomal stalk, playing a central role in the interaction of the ribosome with GTP-bound translation factors. This chain is Large ribosomal subunit protein uL10, found in Clostridium acetobutylicum (strain ATCC 824 / DSM 792 / JCM 1419 / IAM 19013 / LMG 5710 / NBRC 13948 / NRRL B-527 / VKM B-1787 / 2291 / W).